A 274-amino-acid chain; its full sequence is MPELPEVETIRRTLLPLIVGKTIEDVRIFWPNIIRHPRDPEAFAARMIGQTVRGLERRGKFLKFLLDRDALISHLRMEGRYAVASALEPLEPHTHVVFCFTDGSELRYRDVRKFGTMHVYAKEEADRRPPLAELGPEPLSPAFSPAVLAERAVKTKRSVKALLLDQTVVAGFGNIYVDESLFRAGILPGRPAASLSSKEIERLHEEMVATIGEAVMKGGSTVRTYVNTQGEAGAFQHSLFVYGRKGEPCKRCGTPIEKTVVAGRGTHYCPRCQR.

Residue Pro-2 is the Schiff-base intermediate with DNA of the active site. Glu-3 functions as the Proton donor in the catalytic mechanism. The active-site Proton donor; for beta-elimination activity is Lys-60. DNA is bound by residues His-93 and Arg-112. The FPG-type zinc finger occupies 240-274 (FVYGRKGEPCKRCGTPIEKTVVAGRGTHYCPRCQR). The active-site Proton donor; for delta-elimination activity is Arg-264.

The protein belongs to the FPG family. In terms of assembly, monomer. The cofactor is Zn(2+).

It catalyses the reaction Hydrolysis of DNA containing ring-opened 7-methylguanine residues, releasing 2,6-diamino-4-hydroxy-5-(N-methyl)formamidopyrimidine.. The enzyme catalyses 2'-deoxyribonucleotide-(2'-deoxyribose 5'-phosphate)-2'-deoxyribonucleotide-DNA = a 3'-end 2'-deoxyribonucleotide-(2,3-dehydro-2,3-deoxyribose 5'-phosphate)-DNA + a 5'-end 5'-phospho-2'-deoxyribonucleoside-DNA + H(+). Involved in base excision repair of DNA damaged by oxidation or by mutagenic agents. Acts as a DNA glycosylase that recognizes and removes damaged bases. Has a preference for oxidized purines, such as 7,8-dihydro-8-oxoguanine (8-oxoG). Has AP (apurinic/apyrimidinic) lyase activity and introduces nicks in the DNA strand. Cleaves the DNA backbone by beta-delta elimination to generate a single-strand break at the site of the removed base with both 3'- and 5'-phosphates. The sequence is that of Formamidopyrimidine-DNA glycosylase from Geobacillus kaustophilus (strain HTA426).